The primary structure comprises 503 residues: Probable cytosol aminopeptidase (503 aa).

The Mn(2+) site is built by lysine 270 and aspartate 275. Residue lysine 282 is part of the active site. Mn(2+) contacts are provided by aspartate 293, aspartate 352, and glutamate 354. Arginine 356 is a catalytic residue.

It belongs to the peptidase M17 family. The cofactor is Mn(2+).

It localises to the cytoplasm. It catalyses the reaction Release of an N-terminal amino acid, Xaa-|-Yaa-, in which Xaa is preferably Leu, but may be other amino acids including Pro although not Arg or Lys, and Yaa may be Pro. Amino acid amides and methyl esters are also readily hydrolyzed, but rates on arylamides are exceedingly low.. It carries out the reaction Release of an N-terminal amino acid, preferentially leucine, but not glutamic or aspartic acids.. Its function is as follows. Presumably involved in the processing and regular turnover of intracellular proteins. Catalyzes the removal of unsubstituted N-terminal amino acids from various peptides. The protein is Probable cytosol aminopeptidase of Klebsiella pneumoniae subsp. pneumoniae (strain ATCC 700721 / MGH 78578).